Consider the following 419-residue polypeptide: UDP-N-acetylglucosamine 1-carboxyvinyltransferase (419 aa).

Phosphoenolpyruvate is bound at residue 22-23 (KN). Residue R93 coordinates UDP-N-acetyl-alpha-D-glucosamine. C117 functions as the Proton donor in the catalytic mechanism. C117 carries the 2-(S-cysteinyl)pyruvic acid O-phosphothioketal modification. Residues D307 and I329 each coordinate UDP-N-acetyl-alpha-D-glucosamine.

The protein belongs to the EPSP synthase family. MurA subfamily.

Its subcellular location is the cytoplasm. It carries out the reaction phosphoenolpyruvate + UDP-N-acetyl-alpha-D-glucosamine = UDP-N-acetyl-3-O-(1-carboxyvinyl)-alpha-D-glucosamine + phosphate. The protein operates within cell wall biogenesis; peptidoglycan biosynthesis. Its function is as follows. Cell wall formation. Adds enolpyruvyl to UDP-N-acetylglucosamine. This Shewanella woodyi (strain ATCC 51908 / MS32) protein is UDP-N-acetylglucosamine 1-carboxyvinyltransferase.